A 158-amino-acid chain; its full sequence is G-protein-signaling modulator 3 (158 aa).

The disordered stretch occupies residues 1 to 53 (MEAERPQEDGEQSLPQDDQGWPPVNSTARPWRSAPPSPPPPGTRHTALGPRSG). 2 positions are modified to phosphoserine: S33 and S37. The span at 33–42 (SAPPSPPPPG) shows a compositional bias: pro residues. Residues 43–53 (TRHTALGPRSG) show a composition bias toward low complexity. S54 and S57 each carry phosphoserine. The residue at position 60 (T60) is a Phosphothreonine. A GoLoco 1 domain is found at 60 to 82 (TELLLDLVAEAQSRRLEEQRAAF). The interval 78-97 (QRAAFHTPKVPPSLAPTPPR) is disordered. Residues 86–96 (KVPPSLAPTPP) are compositionally biased toward pro residues. 2 GoLoco domains span residues 102–124 (KEQL…RSDP) and 130–153 (GQEL…RSRP).

It localises to the cytoplasm. Its function is as follows. Interacts with subunit of G(i) alpha proteins and regulates the activation of G(i) alpha proteins. In Rattus norvegicus (Rat), this protein is G-protein-signaling modulator 3 (Gpsm3).